The chain runs to 559 residues: Serine/threonine-protein kinase VRK1 (559 aa).

The Protein kinase domain maps to 32–388 (YIVGKQFATG…EDDDEEEEVI (357 aa)). ATP contacts are provided by residues 38-46 (FATGGFGRI) and lysine 61. Catalysis depends on aspartate 167, which acts as the Proton acceptor. Disordered stretches follow at residues 315 to 419 (EAAQ…ATSD) and 448 to 559 (SSCE…SSEV). Composition is skewed to polar residues over residues 405–418 (RSFN…TATS) and 449–460 (SCESQYESNEPG). A compositionally biased stretch (basic and acidic residues) spans 533–542 (TSARYQEKRA). The segment covering 545–559 (NTKPTFDDSSCSSEV) has biased composition (polar residues).

It belongs to the protein kinase superfamily. CK1 Ser/Thr protein kinase family. VRK subfamily. Post-translationally, autophosphorylates in vitro.

It localises to the nucleus. Its subcellular location is the cytoplasm. It is found in the cajal body. The enzyme catalyses L-seryl-[protein] + ATP = O-phospho-L-seryl-[protein] + ADP + H(+). It catalyses the reaction L-threonyl-[protein] + ATP = O-phospho-L-threonyl-[protein] + ADP + H(+). Its function is as follows. Serine/threonine kinase that phosphorylates baf-1, thus regulating the association of baf-1 with chromatin and nuclear membrane proteins during nuclear envelope formation. May act through the egl-17 signaling pathway. Essential in hermaphrodites for formation of the vulva, uterus, and uterine seam cells and for development and maintenance of the somatic gonad and thus the germ line. Acts to prevent cep-1 from triggering an inappropriate cell cycle arrest, thereby promoting germ cell proliferation. Regulates anchor cell polarity and the timing of anchor cell invasion through the basement membranes separating vulval and somatic gonadal cells during the L3 larval stage. The protein is Serine/threonine-protein kinase VRK1 of Caenorhabditis briggsae.